Consider the following 253-residue polypeptide: Uridylate kinase (253 aa).

Residue Lys26 to Gly29 coordinates ATP. Residue Gly68 participates in UMP binding. 2 residues coordinate ATP: Gly69 and Arg73. Residues Asp88 and Thr149–Thr156 contribute to the UMP site. Positions 176, 182, and 185 each coordinate ATP.

The protein belongs to the UMP kinase family. As to quaternary structure, homohexamer.

It localises to the cytoplasm. It carries out the reaction UMP + ATP = UDP + ADP. It participates in pyrimidine metabolism; CTP biosynthesis via de novo pathway; UDP from UMP (UMPK route): step 1/1. With respect to regulation, inhibited by UTP. Its function is as follows. Catalyzes the reversible phosphorylation of UMP to UDP. The polypeptide is Uridylate kinase (Chromohalobacter salexigens (strain ATCC BAA-138 / DSM 3043 / CIP 106854 / NCIMB 13768 / 1H11)).